Here is a 367-residue protein sequence, read N- to C-terminus: Glutamate 5-kinase (367 aa).

An ATP-binding site is contributed by K10. Residues S50, D137, and N149 each coordinate substrate. Residues 169-170 and 211-217 each bind ATP; these read TD and TGGMGTK. One can recognise a PUA domain in the interval 275 to 353; it reads AGELTVDAGA…QQIDAILGYE (79 aa).

The protein belongs to the glutamate 5-kinase family.

Its subcellular location is the cytoplasm. The catalysed reaction is L-glutamate + ATP = L-glutamyl 5-phosphate + ADP. The protein operates within amino-acid biosynthesis; L-proline biosynthesis; L-glutamate 5-semialdehyde from L-glutamate: step 1/2. Catalyzes the transfer of a phosphate group to glutamate to form L-glutamate 5-phosphate. The chain is Glutamate 5-kinase from Klebsiella pneumoniae (strain 342).